The following is a 231-amino-acid chain: Eukaryotic translation initiation factor 4E-1 (231 aa).

Positions 1–55 (MVVEDTQKSSITDDQITANPNNENEDLEEGEILDDDDSSATSRPPSSSGALARNP) are disordered. Residues 8–18 (KSSITDDQITA) show a composition bias toward polar residues. The segment covering 23–38 (ENEDLEEGEILDDDDS) has biased composition (acidic residues). Residues 39–48 (SATSRPPSSS) are compositionally biased toward low complexity. EIF4G-binding regions lie at residues 56–59 (HPLE) and 66–102 (FDNPSAKSKQAAWGSSIRPIYTFATVEEFWSIYNNIH). Residues 74–79 (KQAAWG), lysine 106, and 124–125 (WE) each bind mRNA. The cysteines at positions 129 and 167 are disulfide-linked. The tract at residues 150–159 (YTLLGMIGEQ) is EIF4G-binding. Residues 174-179 (RNRQEK) and 219-223 (KKHDR) contribute to the mRNA site.

Belongs to the eukaryotic initiation factor 4E family. In terms of assembly, EIF4F is a multi-subunit complex, the composition of which varies with external and internal environmental conditions. It is composed of at least EIF4A, EIF4E and EIF4G. EIF4E is also known to interact with other partners. In higher plants two isoforms of EIF4F have been identified, named isoform EIF4F and isoform EIF(iso)4F. Isoform EIF4F has subunits p220 and p26, whereas isoform EIF(iso)4F has subunits p82 and p28. As to quaternary structure, (Microbial infection) Interacts with potyvirus peanut stripe virus (PStV) helper component proteinase (HC-Pro) in the cytoplasm and with PStV viral genome-linked protein (VPg) in the nucleus; these interactions are possible in susceptible hosts but impaired in resistant plants. In terms of processing, according to the redox status, the Cys-129-Cys-167 disulfide bridge may have a role in regulating protein function by affecting its ability to bind capped mRNA. In terms of tissue distribution, expressed ubiquitously with highest levels in young leaves and roots, and lowest levels in flowers.

The protein resides in the nucleus. It localises to the cytoplasm. Its function is as follows. Component of the protein complex eIF4F, which is involved in the recognition of the mRNA cap, ATP-dependent unwinding of 5'-terminal secondary structure and recruitment of mRNA to the ribosome. Recognizes and binds the 7-methylguanosine-containing mRNA cap during an early step in the initiation of protein synthesis and facilitates ribosome binding by inducing the unwinding of the mRNAs secondary structures. Key component of recessive resistance to potyviruses such as peanut stripe virus (PStV). In terms of biological role, (Microbial infection) Susceptibility host factor required for viral infection by recruiting viral RNAs to the host ribosomal complex via an interaction with viral genome-linked protein (VPg). The sequence is that of Eukaryotic translation initiation factor 4E-1 from Arachis hypogaea (Peanut).